The primary structure comprises 454 residues: Glutamine synthetase (454 aa).

The region spanning 25–111 (QGIDFLRLQF…LICDVVDREG (87 aa)) is the GS beta-grasp domain. The 337-residue stretch at 118-454 (PRQVLKNVLA…WETDRYLEKF (337 aa)) folds into the GS catalytic domain. Residues Glu141 and Glu143 each contribute to the Mg(2+) site. Glu193 contacts ATP. Glu198 and Glu205 together coordinate Mg(2+). L-glutamate is bound by residues 249 to 250 (NG) and Gly250. A Mg(2+)-binding site is contributed by His254. Residues 256–258 (HIS) and Ser258 each bind ATP. L-glutamate-binding residues include Arg308, Glu314, and Arg326. Arg326 and Arg331 together coordinate ATP. Position 343 (Glu343) interacts with Mg(2+). Position 345 (Arg345) interacts with L-glutamate.

It belongs to the glutamine synthetase family. As to quaternary structure, oligomer of 12 subunits arranged in the form of two hexagons. In its feedback-inhibited form, interacts with TnrA in order to block its DNA-binding activity. Requires Mg(2+) as cofactor.

The protein resides in the cytoplasm. The enzyme catalyses L-glutamate + NH4(+) + ATP = L-glutamine + ADP + phosphate + H(+). Its activity is regulated as follows. Inhibited by glutamine. Functionally, glutamine synthetase (GS) is an unusual multitasking protein that functions as an enzyme, a transcription coregulator, and a chaperone in ammonium assimilation and in the regulation of genes involved in nitrogen metabolism. It catalyzes the ATP-dependent biosynthesis of glutamine from glutamate and ammonia. Feedback-inhibited GlnA also interacts with and regulates the activity of the transcriptional regulator TnrA. During nitrogen limitation, TnrA is in its DNA-binding active state and turns on the transcription of genes required for nitrogen assimilation. Under conditions of nitrogen excess, feedback-inhibited GlnA forms a stable complex with TnrA, which inhibits its DNA-binding activity. In contrast, feedback-inhibited GlnA acts as a chaperone to stabilize the DNA-binding activity of GlnR, which represses the transcription of nitrogen assimilation genes. This is Glutamine synthetase from Halobacterium salinarum (strain ATCC 700922 / JCM 11081 / NRC-1) (Halobacterium halobium).